The primary structure comprises 171 residues: UPF0098 protein aq_1250 (171 aa).

Belongs to the UPF0098 family.

The protein is UPF0098 protein aq_1250 of Aquifex aeolicus (strain VF5).